We begin with the raw amino-acid sequence, 209 residues long: NADH-ubiquinone oxidoreductase subunit 9 (209 aa).

The protein belongs to the complex I 30 kDa subunit family. In terms of assembly, complex I is composed of about 45 different subunits.

It localises to the mitochondrion inner membrane. The catalysed reaction is a ubiquinone + NADH + 5 H(+)(in) = a ubiquinol + NAD(+) + 4 H(+)(out). In terms of biological role, core subunit of the mitochondrial membrane respiratory chain NADH dehydrogenase (Complex I) that is believed to belong to the minimal assembly required for catalysis. Complex I functions in the transfer of electrons from NADH to the respiratory chain. The immediate electron acceptor for the enzyme is believed to be ubiquinone. The chain is NADH-ubiquinone oxidoreductase subunit 9 (nad9) from Dictyostelium discoideum (Social amoeba).